A 242-amino-acid polypeptide reads, in one-letter code: Floral homeotic protein AGAMOUS (242 aa).

In terms of domain architecture, MADS-box spans 19–73 (RGKIEIKRIENTTNRQVTFCKRRNGLLKKAYELSVLCDAEVALIVFSTRGRLYEY). The region spanning 103–193 (AQFYQQEASK…RAKIAENERA (91 aa)) is the K-box domain.

Flower. Preferentially expressed in stamen and carpel and weakly in petal. Undetected in leaves and roots.

Its subcellular location is the nucleus. In terms of biological role, probable transcription factor involved in regulating genes that determines stamen and carpel development in wild-type flowers. The protein is Floral homeotic protein AGAMOUS (AG2) of Panax ginseng (Korean ginseng).